The sequence spans 409 residues: Sperm equatorial segment protein 1 (409 aa).

The first 18 residues, 1–18, serve as a signal peptide directing secretion; that stretch reads MKPVVLVALLWLWPSSFL. N-linked (GlcNAc...) asparagine glycosylation is present at Asn132. Residues 141 to 223 form a disordered region; it reads EPYIEKEPEP…TTNTQGTPNT (83 aa). Acidic residues predominate over residues 167 to 177; sequence PEPEPESESAP. Residues 198 to 208 are compositionally biased toward polar residues; the sequence is NKVRTGTSRMS. Low complexity predominate over residues 209 to 223; sequence TVITQTTNTQGTPNT.

Belongs to the SPESP1 family. In terms of processing, glycosylated. In testis there are two predominant forms of 77- and 67-kDa and a form of 47-kDa, whereas in epididymal sperm from caput, corpus, and cauda there are two forms of 47- and 43-kDa. Testis forms contain complex carbohydrate residues. Epididymal sperm forms are N-glycosylated. Then undergoes significant glycosylation in the testis and that the majority of these glycoconjugates are removed by the time sperm reach the caput epididymis.

The protein resides in the cytoplasmic vesicle. It localises to the secretory vesicle. The protein localises to the acrosome. Involved in fertilization ability of sperm. This is Sperm equatorial segment protein 1 from Rattus norvegicus (Rat).